The sequence spans 200 residues: Large ribosomal subunit protein uL4 (200 aa).

A disordered region spans residues 38–73; that stretch reads GRQGTKGQKSRSDVSGGGKRPWRQKGTGRARAGTTR.

The protein belongs to the universal ribosomal protein uL4 family. Part of the 50S ribosomal subunit.

In terms of biological role, one of the primary rRNA binding proteins, this protein initially binds near the 5'-end of the 23S rRNA. It is important during the early stages of 50S assembly. It makes multiple contacts with different domains of the 23S rRNA in the assembled 50S subunit and ribosome. Forms part of the polypeptide exit tunnel. This Ectopseudomonas mendocina (strain ymp) (Pseudomonas mendocina) protein is Large ribosomal subunit protein uL4.